The sequence spans 308 residues: D-alanine--D-alanine ligase (308 aa).

One can recognise an ATP-grasp domain in the interval 104–301 (KQIWQGSDLP…FDELCVAILE (198 aa)). 130–185 (IAELGLPVIIKPVHEGSSVGMSKVEKAEDFAAAIEKATQHDAVVMAEKWITGREFT) contacts ATP. Mg(2+) is bound by residues Asp-255, Glu-268, and Asn-270.

Belongs to the D-alanine--D-alanine ligase family. The cofactor is Mg(2+). Mn(2+) is required as a cofactor.

It localises to the cytoplasm. It catalyses the reaction 2 D-alanine + ATP = D-alanyl-D-alanine + ADP + phosphate + H(+). It participates in cell wall biogenesis; peptidoglycan biosynthesis. Cell wall formation. This Acinetobacter baumannii (strain SDF) protein is D-alanine--D-alanine ligase.